A 377-amino-acid polypeptide reads, in one-letter code: Iris (377 aa).

N-linked (GlcNAc...) asparagine glycosylation is found at N11 and N226.

This sequence belongs to the serpin family. As to expression, female saliva (at protein level). Female salivary gland (at protein level).

It is found in the secreted. In terms of biological role, serine protease inhibitor with anticoagulant and immunosuppressive properties that can modulate blood feeding of ticks on vertebrate species. Strongly inhibits human leukocyte elastase (ELANE) and porcine pancreatic elastase. Moderately inhibits human tPA/tissue-type plasminogen activator (PLAT), coagulation factor Xa (F10), thrombin (F2) and trypsin. Does not inhibit human plasmin (PLG). Inhibits platelet aggregation. Inhibits the intrinsic pathway of blood coagulation in the host. Inhibits fibrinolysis in the host. Inhibits proliferation of mouse splenocytes. Decreases the number of IFN-gamma (IFNG)-producing human peripheral blood mononuclear cells (PBMCs) after stimulation with phytohemagglutinin A (PHA). Increases the number of IL10-producing human PBMCs after stimulation with lipopolysaccharides (LPS) with no significant effect on IL10 production. Inhibits production of IFNG, IL6, TNF-alpha (TNF) and CXCL8 by human PBMCs. Binds to monocyte/macrophage subpopulation of the host PBMCs. Increases both survival rate and survival time in mice with LPS-induced endotoxemic shock. The chain is Iris from Ixodes ricinus (Common tick).